The following is a 1208-amino-acid chain: DNA-directed RNA polymerase subunit beta (1208 aa).

The disordered stretch occupies residues 1182–1208; sequence EKKAAEQVEDEKDDVIQNFETAEDNLD.

It belongs to the RNA polymerase beta chain family. As to quaternary structure, the RNAP catalytic core consists of 2 alpha, 1 beta, 1 beta' and 1 omega subunit. When a sigma factor is associated with the core the holoenzyme is formed, which can initiate transcription.

The catalysed reaction is RNA(n) + a ribonucleoside 5'-triphosphate = RNA(n+1) + diphosphate. Functionally, DNA-dependent RNA polymerase catalyzes the transcription of DNA into RNA using the four ribonucleoside triphosphates as substrates. This Enterococcus faecium (Streptococcus faecium) protein is DNA-directed RNA polymerase subunit beta.